Here is a 444-residue protein sequence, read N- to C-terminus: Methylenetetrahydrofolate--tRNA-(uracil-5-)-methyltransferase TrmFO (444 aa).

9 to 14 (GAGMAG) is a binding site for FAD.

This sequence belongs to the MnmG family. TrmFO subfamily. FAD is required as a cofactor.

It is found in the cytoplasm. The catalysed reaction is uridine(54) in tRNA + (6R)-5,10-methylene-5,6,7,8-tetrahydrofolate + NADH + H(+) = 5-methyluridine(54) in tRNA + (6S)-5,6,7,8-tetrahydrofolate + NAD(+). The enzyme catalyses uridine(54) in tRNA + (6R)-5,10-methylene-5,6,7,8-tetrahydrofolate + NADPH + H(+) = 5-methyluridine(54) in tRNA + (6S)-5,6,7,8-tetrahydrofolate + NADP(+). Functionally, catalyzes the folate-dependent formation of 5-methyl-uridine at position 54 (M-5-U54) in all tRNAs. The chain is Methylenetetrahydrofolate--tRNA-(uracil-5-)-methyltransferase TrmFO from Cereibacter sphaeroides (strain KD131 / KCTC 12085) (Rhodobacter sphaeroides).